Consider the following 389-residue polypeptide: Urotensin-2 receptor (389 aa).

Over residues 1-10 (MALTPESPSS) the composition is skewed to polar residues. The segment at 1–39 (MALTPESPSSFPGLAATGSSVPEPPGGPNATLNSSWASP) is disordered. Topologically, residues 1–54 (MALTPESPSSFPGLAATGSSVPEPPGGPNATLNSSWASPTEPSSLEDLVATGTI) are extracellular. 2 N-linked (GlcNAc...) asparagine glycosylation sites follow: asparagine 29 and asparagine 33. Positions 30–39 (ATLNSSWASP) are enriched in polar residues. A helical membrane pass occupies residues 55-77 (GTLLSAMGVVGVVGNAYTLVVTC). Residues 78-87 (RSLRAVASMY) lie on the Cytoplasmic side of the membrane. A helical membrane pass occupies residues 88 to 113 (VYVVNLALADLLYLLSIPFIVATYVT). Residues 114–124 (KEWHFGDVGCR) lie on the Extracellular side of the membrane. Cysteine 123 and cysteine 199 form a disulfide bridge. Residues 125 to 146 (VLFGLDFLTMHASIFTLTVMSS) form a helical membrane-spanning segment. The Cytoplasmic portion of the chain corresponds to 147 to 167 (ERYAAVLRPLDTVQRPKGYRK). The chain crosses the membrane as a helical span at residues 168–186 (LLALGTWLLALLLTLPVML). At 187-209 (AMRLVRRGPKSLCLPAWGPRAHR) the chain is on the extracellular side. A helical membrane pass occupies residues 210–232 (AYLTLLFATSIAGPGLLIGLLYA). Residues 233–258 (RLARAYRRSQRASFKRARRPGARALR) are Cytoplasmic-facing. The chain crosses the membrane as a helical span at residues 259 to 284 (LVLGIVLLFWACFLPFWLWQLLAQYH). Residues 285-297 (QAPLAPRTARIVN) are Extracellular-facing. A helical membrane pass occupies residues 298 to 318 (YLTTCLTYGNSCANPFLYTLL). The Cytoplasmic portion of the chain corresponds to 319 to 389 (TRNYRDHLRG…PAPEGPRAPA (71 aa)). A disordered region spans residues 328–389 (GRVRGPGSGG…PAPEGPRAPA (62 aa)). Residues 331-340 (RGPGSGGGRG) show a composition bias toward gly residues. Residues 355 to 368 (SGRSLSSCSPQPTD) show a composition bias toward polar residues. The span at 377-389 (PARPAPEGPRAPA) shows a compositional bias: pro residues.

Belongs to the G-protein coupled receptor 1 family. As to expression, most abundant expression in the heart and pancreas.

Its subcellular location is the cell membrane. Its function is as follows. High affinity receptor for urotensin-2 and urotensin-2B. The activity of this receptor is mediated by a G-protein that activate a phosphatidylinositol-calcium second messenger system. The polypeptide is Urotensin-2 receptor (UTS2R) (Homo sapiens (Human)).